Consider the following 163-residue polypeptide: Nucleotide-binding protein AM1_1863 (163 aa).

The protein belongs to the YajQ family.

Functionally, nucleotide-binding protein. This is Nucleotide-binding protein AM1_1863 from Acaryochloris marina (strain MBIC 11017).